The sequence spans 529 residues: Low affinity inorganic phosphate transporter 5 (529 aa).

Topologically, residues M1 to H21 are cytoplasmic. The chain crosses the membrane as a helical span at residues V22–I42. Residues S43–N71 lie on the Extracellular side of the membrane. Residues W72 to G92 traverse the membrane as a helical segment. The Cytoplasmic portion of the chain corresponds to D93–K99. The chain crosses the membrane as a helical span at residues V100–G120. The Extracellular segment spans residues Y121–K124. The helical transmembrane segment at V125 to Y145 threads the bilayer. Topologically, residues P146–A163 are cytoplasmic. A helical membrane pass occupies residues F164 to M184. The Extracellular segment spans residues T185 to A211. The helical transmembrane segment at D212–W232 threads the bilayer. The Cytoplasmic portion of the chain corresponds to R233–R291. Residues H292–S312 form a helical membrane-spanning segment. Over Q313–R344 the chain is Extracellular. Residue N314 is glycosylated (N-linked (GlcNAc...) asparagine). Residues A345 to I365 traverse the membrane as a helical segment. Residues E366–Q374 are Cytoplasmic-facing. Residues L375–L395 form a helical membrane-spanning segment. Topologically, residues K396–A405 are extracellular. The chain crosses the membrane as a helical span at residues A406–L426. Over P427–K472 the chain is Cytoplasmic. A helical transmembrane segment spans residues A473 to E493. Residues T494 to D529 lie on the Extracellular side of the membrane. The interval E500–D529 is disordered. Residue N510 is glycosylated (N-linked (GlcNAc...) asparagine).

This sequence belongs to the major facilitator superfamily. Phosphate:H(+) symporter (TC 2.A.1.9) family. As to expression, expressed at low levels in non-mycorrhized roots.

The protein localises to the cell membrane. The catalysed reaction is phosphate(in) + H(+)(in) = phosphate(out) + H(+)(out). Low-affinity transporter for external inorganic phosphate (Pi) probably involved in the acquisition of phosphate released by arbuscular mycorrhizal (AM) fungi during AM symbiosis. This chain is Low affinity inorganic phosphate transporter 5, found in Petunia hybrida (Petunia).